The sequence spans 167 residues: UPF0587 protein F46B6.12 (167 aa).

Residues cysteine 34, cysteine 37, cysteine 68, and cysteine 71 each contribute to the Zn(2+) site.

Belongs to the UPF0587 family.

This chain is UPF0587 protein F46B6.12, found in Caenorhabditis elegans.